Here is a 418-residue protein sequence, read N- to C-terminus: Tyrosine--tRNA ligase (418 aa).

An L-tyrosine-binding site is contributed by Tyr34. A 'HIGH' region motif is present at residues 39–48; it reads PTADSLHLGH. Residues Tyr169 and Gln173 each coordinate L-tyrosine. The 'KMSKS' region signature appears at 229–233; sequence KFGKS. Lys232 contributes to the ATP binding site. Positions 352–418 constitute an S4 RNA-binding domain; the sequence is LNLVDMLVTA…GKKKYAVLTY (67 aa).

This sequence belongs to the class-I aminoacyl-tRNA synthetase family. TyrS type 1 subfamily. In terms of assembly, homodimer.

Its subcellular location is the cytoplasm. It carries out the reaction tRNA(Tyr) + L-tyrosine + ATP = L-tyrosyl-tRNA(Tyr) + AMP + diphosphate + H(+). In terms of biological role, catalyzes the attachment of tyrosine to tRNA(Tyr) in a two-step reaction: tyrosine is first activated by ATP to form Tyr-AMP and then transferred to the acceptor end of tRNA(Tyr). This chain is Tyrosine--tRNA ligase, found in Streptococcus pyogenes serotype M3 (strain SSI-1).